We begin with the raw amino-acid sequence, 215 residues long: Large ribosomal subunit protein uL3 (215 aa).

Residue glutamine 156 is modified to N5-methylglutamine.

Belongs to the universal ribosomal protein uL3 family. Part of the 50S ribosomal subunit. Forms a cluster with proteins L14 and L19. In terms of processing, methylated by PrmB.

Functionally, one of the primary rRNA binding proteins, it binds directly near the 3'-end of the 23S rRNA, where it nucleates assembly of the 50S subunit. The polypeptide is Large ribosomal subunit protein uL3 (Xylella fastidiosa (strain 9a5c)).